A 129-amino-acid polypeptide reads, in one-letter code: NADH-quinone oxidoreductase subunit A (129 aa).

3 helical membrane passes run 6-26 (FWPF…IVGF), 63-83 (LVAV…AWAV), and 89-109 (GWIG…ALIY).

It belongs to the complex I subunit 3 family. NDH-1 is composed of 14 different subunits. Subunits NuoA, H, J, K, L, M, N constitute the membrane sector of the complex.

Its subcellular location is the cell inner membrane. The catalysed reaction is a quinone + NADH + 5 H(+)(in) = a quinol + NAD(+) + 4 H(+)(out). NDH-1 shuttles electrons from NADH, via FMN and iron-sulfur (Fe-S) centers, to quinones in the respiratory chain. The immediate electron acceptor for the enzyme in this species is believed to be ubiquinone. Couples the redox reaction to proton translocation (for every two electrons transferred, four hydrogen ions are translocated across the cytoplasmic membrane), and thus conserves the redox energy in a proton gradient. This is NADH-quinone oxidoreductase subunit A from Nitrosococcus oceani (strain ATCC 19707 / BCRC 17464 / JCM 30415 / NCIMB 11848 / C-107).